The following is a 138-amino-acid chain: Large ribosomal subunit protein uL16 (138 aa).

This sequence belongs to the universal ribosomal protein uL16 family. In terms of assembly, part of the 50S ribosomal subunit.

Binds 23S rRNA and is also seen to make contacts with the A and possibly P site tRNAs. The polypeptide is Large ribosomal subunit protein uL16 (Chlamydia muridarum (strain MoPn / Nigg)).